A 447-amino-acid polypeptide reads, in one-letter code: Phosphoglucosamine mutase (447 aa).

Serine 104 functions as the Phosphoserine intermediate in the catalytic mechanism. Residues serine 104, aspartate 243, aspartate 245, and aspartate 247 each coordinate Mg(2+). Serine 104 is subject to Phosphoserine.

The protein belongs to the phosphohexose mutase family. Mg(2+) serves as cofactor. Activated by phosphorylation.

It carries out the reaction alpha-D-glucosamine 1-phosphate = D-glucosamine 6-phosphate. Functionally, catalyzes the conversion of glucosamine-6-phosphate to glucosamine-1-phosphate. This chain is Phosphoglucosamine mutase, found in Corynebacterium glutamicum (strain ATCC 13032 / DSM 20300 / JCM 1318 / BCRC 11384 / CCUG 27702 / LMG 3730 / NBRC 12168 / NCIMB 10025 / NRRL B-2784 / 534).